A 391-amino-acid polypeptide reads, in one-letter code: NADH-quinone oxidoreductase subunit D (391 aa).

It belongs to the complex I 49 kDa subunit family. As to quaternary structure, NDH-1 is composed of 14 different subunits. Subunits NuoB, C, D, E, F, and G constitute the peripheral sector of the complex.

The protein resides in the cell inner membrane. It catalyses the reaction a quinone + NADH + 5 H(+)(in) = a quinol + NAD(+) + 4 H(+)(out). In terms of biological role, NDH-1 shuttles electrons from NADH, via FMN and iron-sulfur (Fe-S) centers, to quinones in the respiratory chain. The immediate electron acceptor for the enzyme in this species is believed to be ubiquinone. Couples the redox reaction to proton translocation (for every two electrons transferred, four hydrogen ions are translocated across the cytoplasmic membrane), and thus conserves the redox energy in a proton gradient. This chain is NADH-quinone oxidoreductase subunit D, found in Rickettsia canadensis (strain McKiel).